Reading from the N-terminus, the 581-residue chain is Serine/threonine protein phosphatase 2A 55 kDa regulatory subunit B alpha isoform (581 aa).

The interval M1–P27 is disordered. Positions A14–G25 are enriched in low complexity. WD repeat units follow at residues Q47–S86 and E123–V164. The segment covering R172 to G189 has biased composition (low complexity). The segment at R172–P192 is disordered. WD repeat units follow at residues A241 to N279, D290 to N330, E349 to S387, and D492 to I530.

Belongs to the phosphatase 2A regulatory subunit B family. As to quaternary structure, PP2A consists of a common heteromeric enzyme, composed of a catalytic subunit (subunits C), a constant regulatory subunit (subunit A), and a variety of regulatory subunits such as subunits B (the R2/B/PR55/B55, R3/B''/PR72/PR130/PR59 and R5/B'/B56 families).

Functionally, the B regulatory subunit may modulate substrate selectivity and catalytic activity, and may also direct the localization of the catalytic enzyme to a particular subcellular compartment. The protein is Serine/threonine protein phosphatase 2A 55 kDa regulatory subunit B alpha isoform of Oryza sativa subsp. japonica (Rice).